The following is a 151-amino-acid chain: Large ribosomal subunit protein bL9 (151 aa).

Belongs to the bacterial ribosomal protein bL9 family.

Binds to the 23S rRNA. This chain is Large ribosomal subunit protein bL9, found in Mycoplasmopsis agalactiae (strain NCTC 10123 / CIP 59.7 / PG2) (Mycoplasma agalactiae).